Here is a 257-residue protein sequence, read N- to C-terminus: NAD-capped RNA hydrolase NudC (257 aa).

Residue R69 participates in substrate binding. Zn(2+) is bound by residues C98 and C101. E111 is a substrate binding site. Positions 116 and 119 each coordinate Zn(2+). Substrate is bound at residue Y124. The Nudix hydrolase domain occupies 125–248; the sequence is PQIAPCIIVA…TVARRLIEDT (124 aa). A divalent metal cation is bound by residues A158, E174, and E178. The Nudix box motif lies at 159-180; it reads GFVEVGETLEQAAAREIFEESR. 192–199 provides a ligand contact to substrate; the sequence is QPWPFPHS. E219 is a binding site for a divalent metal cation. Position 241 (A241) interacts with substrate.

Belongs to the Nudix hydrolase family. NudC subfamily. In terms of assembly, homodimer. The cofactor is Mg(2+). Mn(2+) serves as cofactor. Requires Zn(2+) as cofactor.

It carries out the reaction a 5'-end NAD(+)-phospho-ribonucleoside in mRNA + H2O = a 5'-end phospho-adenosine-phospho-ribonucleoside in mRNA + beta-nicotinamide D-ribonucleotide + 2 H(+). The catalysed reaction is NAD(+) + H2O = beta-nicotinamide D-ribonucleotide + AMP + 2 H(+). The enzyme catalyses NADH + H2O = reduced beta-nicotinamide D-ribonucleotide + AMP + 2 H(+). In terms of biological role, mRNA decapping enzyme that specifically removes the nicotinamide adenine dinucleotide (NAD) cap from a subset of mRNAs by hydrolyzing the diphosphate linkage to produce nicotinamide mononucleotide (NMN) and 5' monophosphate mRNA. The NAD-cap is present at the 5'-end of some mRNAs and stabilizes RNA against 5'-processing. Has preference for mRNAs with a 5'-end purine. Catalyzes the hydrolysis of a broad range of dinucleotide pyrophosphates. This is NAD-capped RNA hydrolase NudC from Edwardsiella ictaluri (strain 93-146).